Consider the following 291-residue polypeptide: Quinol oxidase subunit 2 (291 aa).

The N-terminal stretch at 1-28 (MQLKKAFWKLASLLPXSLLLFLGGCDKK) is a signal peptide. 2 helical membrane-spanning segments follow: residues 49 to 69 (SFLLMSLIIAIVFILFTVILI) and 91 to 111 (LEIIWTLVPVIIVIALSIPTV).

It belongs to the cytochrome c oxidase subunit 2 family.

Its subcellular location is the cell membrane. It carries out the reaction 2 a quinol + O2 = 2 a quinone + 2 H2O. Catalyzes quinol oxidation with the concomitant reduction of oxygen to water. Subunit II transfers the electrons from a quinol to the binuclear center of the catalytic subunit I. This Bacillus cereus (strain ATCC 10987 / NRS 248) protein is Quinol oxidase subunit 2.